A 360-amino-acid polypeptide reads, in one-letter code: Phosphoserine aminotransferase (360 aa).

Position 42 (arginine 42) interacts with L-glutamate. Residues 76–77, tryptophan 102, threonine 152, aspartate 172, and glutamine 195 contribute to the pyridoxal 5'-phosphate site; that span reads AS. Lysine 196 carries the N6-(pyridoxal phosphate)lysine modification. Residue 237-238 participates in pyridoxal 5'-phosphate binding; sequence NT.

Belongs to the class-V pyridoxal-phosphate-dependent aminotransferase family. SerC subfamily. Homodimer. Pyridoxal 5'-phosphate serves as cofactor.

The protein resides in the cytoplasm. It catalyses the reaction O-phospho-L-serine + 2-oxoglutarate = 3-phosphooxypyruvate + L-glutamate. The enzyme catalyses 4-(phosphooxy)-L-threonine + 2-oxoglutarate = (R)-3-hydroxy-2-oxo-4-phosphooxybutanoate + L-glutamate. It participates in amino-acid biosynthesis; L-serine biosynthesis; L-serine from 3-phospho-D-glycerate: step 2/3. Functionally, catalyzes the reversible conversion of 3-phosphohydroxypyruvate to phosphoserine and of 3-hydroxy-2-oxo-4-phosphonooxybutanoate to phosphohydroxythreonine. In Bacillus thuringiensis subsp. konkukian (strain 97-27), this protein is Phosphoserine aminotransferase.